Here is a 220-residue protein sequence, read N- to C-terminus: Large ribosomal subunit protein uL16 (220 aa).

It belongs to the universal ribosomal protein uL16 family. As to quaternary structure, component of the small ribosomal subunit. Mature ribosomes consist of a small (40S) and a large (60S) subunit. The 40S subunit contains about 33 different proteins and 1 molecule of RNA (18S). The 60S subunit contains about 49 different proteins and 3 molecules of RNA (25S, 5.8S and 5S).

This Vitis riparia (Frost grape) protein is Large ribosomal subunit protein uL16 (RPL10).